A 222-amino-acid chain; its full sequence is Vespryn (222 aa).

A signal peptide spans 1-44 (MSPSAGLQFSLYFLQTKKVLWKLTDKEKGLCYILLFTLCFFADQ). A propeptide spanning residues 45–52 (ENGGKALA) is cleaved from the precursor. The B30.2/SPRY domain maps to 53–159 (SPPGIWKRAD…RIWQMGLWWL (107 aa)). The propeptide occupies 160-222 (RHLETDPGRV…LGGTVSLTTL (63 aa)). Asn195 is a glycosylation site (N-linked (GlcNAc...) asparagine).

The protein belongs to the ohanin/vespryn family. As to expression, expressed by the venom gland.

The protein localises to the secreted. Its function is as follows. Neurotoxin that produces dose-dependent hypolocomotion and hyperalgesia in mice. May directly act on the central nervous system, as it is 6500-fold more potent when administered intracerebroventricularly than intraperitoneal. This chain is Vespryn, found in Crotalus adamanteus (Eastern diamondback rattlesnake).